Here is an 85-residue protein sequence, read N- to C-terminus: Large ribosomal subunit protein bL27 (85 aa).

The interval 1-20 (MAHKKAGGSTRNGRDSESKR) is disordered.

Belongs to the bacterial ribosomal protein bL27 family.

The sequence is that of Large ribosomal subunit protein bL27 from Yersinia pseudotuberculosis serotype O:1b (strain IP 31758).